The sequence spans 314 residues: Porphobilinogen deaminase (314 aa).

C242 carries the S-(dipyrrolylmethanemethyl)cysteine modification.

This sequence belongs to the HMBS family. As to quaternary structure, monomer. Dipyrromethane serves as cofactor.

The catalysed reaction is 4 porphobilinogen + H2O = hydroxymethylbilane + 4 NH4(+). It participates in porphyrin-containing compound metabolism; protoporphyrin-IX biosynthesis; coproporphyrinogen-III from 5-aminolevulinate: step 2/4. Its function is as follows. Tetrapolymerization of the monopyrrole PBG into the hydroxymethylbilane pre-uroporphyrinogen in several discrete steps. This chain is Porphobilinogen deaminase (hemC), found in Bacillus subtilis (strain 168).